The chain runs to 339 residues: DNA-directed RNA polymerase subunit alpha (339 aa).

Residues 1 to 237 are alpha N-terminal domain (alpha-NTD); the sequence is MENELMYMNW…EQMNVFINFD (237 aa). Residues 256 to 339 form an alpha C-terminal domain (alpha-CTD) region; it reads FNENLYRSVN…PPAEDNKEGE (84 aa).

This sequence belongs to the RNA polymerase alpha chain family. In terms of assembly, homodimer. The RNAP catalytic core consists of 2 alpha, 1 beta, 1 beta' and 1 omega subunit. When a sigma factor is associated with the core the holoenzyme is formed, which can initiate transcription.

The enzyme catalyses RNA(n) + a ribonucleoside 5'-triphosphate = RNA(n+1) + diphosphate. Functionally, DNA-dependent RNA polymerase catalyzes the transcription of DNA into RNA using the four ribonucleoside triphosphates as substrates. The polypeptide is DNA-directed RNA polymerase subunit alpha (Desulfosudis oleivorans (strain DSM 6200 / JCM 39069 / Hxd3) (Desulfococcus oleovorans)).